Here is a 910-residue protein sequence, read N- to C-terminus: Disease susceptibility protein LOV1 (910 aa).

Positions 22–60 (ARLNGIGEQVDGLKRQLGRLQSLLKDADAKKHESERVRN) form a coiled coil. The region spanning 169–461 (EQSVEALAGH…AAEGIITSSD (293 aa)) is the NB-ARC domain. LRR repeat units lie at residues 584 to 609 (LPLL…IGDL), 610 to 632 (IHLR…LRNL), 634 to 655 (LLLY…LKEM), 700 to 725 (MTKL…LGQL), 726 to 751 (RSLE…IVLN), and 847 to 871 (MPLL…NYIT).

This sequence belongs to the disease resistance NB-LRR family. RPP8/HRT subfamily.

Confers susceptibility to the fungus Cochliobolus victoriae by conditioning victorin-dependent (victorin is a toxin synthesized by C.victoriae) induction of defense-associated proteins. The sequence is that of Disease susceptibility protein LOV1 (LOV1) from Arabidopsis thaliana (Mouse-ear cress).